The primary structure comprises 332 residues: Flotillin-like protein FloA (332 aa).

The helical transmembrane segment at 9–29 (FILIGGGIIFVVLFFHYVPFF) threads the bilayer.

It belongs to the flotillin-like FloA family. In terms of assembly, homooligomerizes.

The protein localises to the cell membrane. Its subcellular location is the membrane raft. Functionally, found in functional membrane microdomains (FMM) that may be equivalent to eukaryotic membrane rafts. FMMs are highly dynamic and increase in number as cells age. Flotillins are thought to be important factors in membrane fluidity. This is Flotillin-like protein FloA from Phocaeicola vulgatus (strain ATCC 8482 / DSM 1447 / JCM 5826 / CCUG 4940 / NBRC 14291 / NCTC 11154) (Bacteroides vulgatus).